Reading from the N-terminus, the 108-residue chain is Pumilarin (108 aa).

Positions 1–38 (MTETKNEIKLHVLFGALAVGFLMLALFSFSLQMLPVAD) are excised as a propeptide. The cyclopeptide (Leu-Trp) cross-link spans 39–108 (LAKEFGIPGS…KKGRKAVIAW (70 aa)).

Post-translationally, the cross-link permits a high resistance to proteolysis. Is more resistant to specific proteases than to unspecific proteases.

It localises to the secreted. Functionally, cyclopeptide antibiotic that inhibits both Gram-positive and Gram-negative bacteria. Shows potent to weak activities against M.flavus (MIC=3 ug/ml), B.cereus (MIC=12 ug/ml), B.pumilus (MIC=12 ug/ml), E.coli (MIC=12 ug/ml), and S.pneumoniae (MIC=47 ug/ml). May act by forming pores. The polypeptide is Pumilarin (Bacillus safensis).